The following is a 198-amino-acid chain: Twist-related protein 1 (198 aa).

Over residues 1–18 (MMQDVSSSPVSPADDSLS) the composition is skewed to low complexity. Residues 1-101 (MMQDVSSSPV…GGGSPQSYEE (101 aa)) form a disordered region. Positions 34–43 (RGGRKRRSSR) are enriched in basic residues. Gly residues-rich tracts occupy residues 46-64 (AGGG…GGDE) and 79-95 (GCGG…GGGS). The region spanning 104–155 (TQRVMANVRERQRTQSLNEAFAALRKIIPTLPSDKLSKIQTLKLAARYIDFL) is the bHLH domain. The segment at 157 to 187 (QVLQSDELDSKMASCSYVAHERLSYAFSVWR) is sufficient for transactivation activity.

Efficient DNA binding requires dimerization with another bHLH protein. Homodimer or heterodimer with E proteins such as TCF3. ID1 binds preferentially to TCF3 but does not interact efficiently with TWIST1 so ID1 levels control the amount of TCF3 available to dimerize with TWIST and thus determine the type of dimer formed.

The protein localises to the nucleus. Acts as a transcriptional regulator. Inhibits myogenesis by sequestrating E proteins, inhibiting trans-activation by MEF2, and inhibiting DNA-binding by MYOD1 through physical interaction. This interaction probably involves the basic domains of both proteins. Also represses expression of pro-inflammatory cytokines such as TNFA and IL1B. Regulates cranial suture patterning and fusion. Activates transcription as a heterodimer with E proteins. Regulates gene expression differentially, depending on dimer composition. Homodimers induce expression of FGFR2 and POSTN while heterodimers repress FGFR2 and POSTN expression and induce THBS1 expression. Heterodimerization is also required for osteoblast differentiation. Represses the activity of the circadian transcriptional activator: NPAS2-BMAL1 heterodimer. In Eulemur fulvus fulvus (Brown lemur), this protein is Twist-related protein 1 (TWIST1).